The chain runs to 459 residues: UDP-N-acetylmuramoylalanine--D-glutamate ligase (459 aa).

Position 119–125 (119–125 (GTNGKTT)) interacts with ATP.

It belongs to the MurCDEF family.

It localises to the cytoplasm. It carries out the reaction UDP-N-acetyl-alpha-D-muramoyl-L-alanine + D-glutamate + ATP = UDP-N-acetyl-alpha-D-muramoyl-L-alanyl-D-glutamate + ADP + phosphate + H(+). The protein operates within cell wall biogenesis; peptidoglycan biosynthesis. Functionally, cell wall formation. Catalyzes the addition of glutamate to the nucleotide precursor UDP-N-acetylmuramoyl-L-alanine (UMA). In Lacticaseibacillus casei (strain BL23) (Lactobacillus casei), this protein is UDP-N-acetylmuramoylalanine--D-glutamate ligase.